The following is a 130-amino-acid chain: Large ribosomal subunit protein bL17 (130 aa).

This sequence belongs to the bacterial ribosomal protein bL17 family. As to quaternary structure, part of the 50S ribosomal subunit. Contacts protein L32.

In Paraburkholderia xenovorans (strain LB400), this protein is Large ribosomal subunit protein bL17.